The sequence spans 136 residues: MARTKQTARKSTGGKAPRKALATKAARKSAIVTGSVKKVHRFRPGTVALREIRRYQKSTELLLRKLPFQRLVREIAQDFKTDLRFQSAAIGALQEASEAYLVGLFEDTNLCAIHAKRVTIMPKDMQLARRIRGERS.

Positions 1–20 (MARTKQTARKSTGGKAPRKA) are disordered. N6-acetyllysine; alternate is present on residues K5 and K10. Residues K5 and K10 each carry the N6-methylated lysine; alternate modification. S11 is subject to Phosphoserine. K15 and K24 each carry N6-acetyllysine. K28 carries the post-translational modification N6-methylated lysine. At S29 the chain carries Phosphoserine. An N6-methylated lysine mark is found at K37 and K80.

This sequence belongs to the histone H3 family. In terms of assembly, the nucleosome is a histone octamer containing two molecules each of H2A, H2B, H3 and H4 assembled in one H3-H4 heterotetramer and two H2A-H2B heterodimers. The octamer wraps approximately 147 bp of DNA. Acetylation is generally linked to gene activation. Post-translationally, methylation at Lys-5 is linked to gene activation. Methylation at Lys-10 is linked to gene repression.

It localises to the nucleus. The protein resides in the chromosome. In terms of biological role, putative variant histone H3 which may replace conventional H3 in a subset of nucleosomes. Nucleosomes wrap and compact DNA into chromatin, limiting DNA accessibility to the cellular machineries which require DNA as a template. Histones thereby play a central role in transcription regulation, DNA repair, DNA replication and chromosomal stability. DNA accessibility is regulated via a complex set of post-translational modifications of histones, also called histone code, and nucleosome remodeling. The protein is Histone H3.3-like type 2 (his-74) of Caenorhabditis elegans.